The sequence spans 213 residues: Octanoyltransferase (213 aa).

The BPL/LPL catalytic domain occupies aspartate 32–proline 207. Residues arginine 71–histidine 78, serine 138–glycine 140, and glycine 151–alanine 153 contribute to the substrate site. The active-site Acyl-thioester intermediate is the cysteine 169.

It belongs to the LipB family.

Its subcellular location is the cytoplasm. It carries out the reaction octanoyl-[ACP] + L-lysyl-[protein] = N(6)-octanoyl-L-lysyl-[protein] + holo-[ACP] + H(+). It functions in the pathway protein modification; protein lipoylation via endogenous pathway; protein N(6)-(lipoyl)lysine from octanoyl-[acyl-carrier-protein]: step 1/2. Catalyzes the transfer of endogenously produced octanoic acid from octanoyl-acyl-carrier-protein onto the lipoyl domains of lipoate-dependent enzymes. Lipoyl-ACP can also act as a substrate although octanoyl-ACP is likely to be the physiological substrate. The protein is Octanoyltransferase of Enterobacter sp. (strain 638).